We begin with the raw amino-acid sequence, 134 residues long: Small ribosomal subunit protein uS8c (134 aa).

The protein belongs to the universal ribosomal protein uS8 family. As to quaternary structure, part of the 30S ribosomal subunit.

It is found in the plastid. Its subcellular location is the chloroplast. One of the primary rRNA binding proteins, it binds directly to 16S rRNA central domain where it helps coordinate assembly of the platform of the 30S subunit. In Aethionema grandiflorum (Persian stone-cress), this protein is Small ribosomal subunit protein uS8c (rps8).